Reading from the N-terminus, the 448-residue chain is Trigger factor (448 aa).

In terms of domain architecture, PPIase FKBP-type spans 172 to 257 (GDRVTVDFVG…MKKVEWPHLP (86 aa)).

Belongs to the FKBP-type PPIase family. Tig subfamily.

The protein localises to the cytoplasm. It catalyses the reaction [protein]-peptidylproline (omega=180) = [protein]-peptidylproline (omega=0). Its function is as follows. Involved in protein export. Acts as a chaperone by maintaining the newly synthesized protein in an open conformation. Functions as a peptidyl-prolyl cis-trans isomerase. This Burkholderia multivorans (strain ATCC 17616 / 249) protein is Trigger factor.